A 646-amino-acid chain; its full sequence is Replication protein E1 (646 aa).

The Nuclear localization signal motif lies at 83-85; that stretch reads KRK. Phosphoserine; by host is present on residues Ser89, Ser93, and Ser107. The Nuclear export signal signature appears at 106-115; that stretch reads ISPRLDAIKL. The tract at residues 145-185 is disordered; sequence ETQVERNGEPENDCGGGGHGRDKEGEGQVHTEVHTGSQIEE. Residues 163–185 show a composition bias toward basic and acidic residues; the sequence is HGRDKEGEGQVHTEVHTGSQIEE. Positions 184–350 are DNA-binding region; sequence EEHTGTTRVL…QTIVEHGLAD (167 aa). The region spanning 449-599 is the SF3 helicase domain; the sequence is IEFIPFLSKL…FPFDRNGNAV (151 aa). Residue 475 to 482 coordinates ATP; that stretch reads GPPDTGKS. A Glycyl lysine isopeptide (Lys-Gly) (interchain with G-Cter in SUMO) cross-link involves residue Lys556.

It belongs to the papillomaviridae E1 protein family. In terms of assembly, can form hexamers. Interacts with E2 protein; this interaction increases E1 DNA binding specificity. Interacts with host DNA polymerase subunit POLA2. Interacts with host single stranded DNA-binding protein RPA1. Interacts with host TOP1; this interaction stimulates the enzymatic activity of TOP1. Phosphorylated. Post-translationally, sumoylated.

It localises to the host nucleus. The enzyme catalyses Couples ATP hydrolysis with the unwinding of duplex DNA by translocating in the 3'-5' direction.. It catalyses the reaction ATP + H2O = ADP + phosphate + H(+). ATP-dependent DNA 3'-5' helicase required for initiation of viral DNA replication. It forms a complex with the viral E2 protein. The E1-E2 complex binds to the replication origin which contains binding sites for both proteins. During the initial step, a dimer of E1 interacts with a dimer of protein E2 leading to a complex that binds the viral origin of replication with high specificity. Then, a second dimer of E1 displaces the E2 dimer in an ATP-dependent manner to form the E1 tetramer. Following this, two E1 monomers are added to each half of the site, which results in the formation of two E1 trimers on the viral ori. Subsequently, two hexamers will be created. The double hexamer acts as a bi-directional helicase machinery and unwinds the viral DNA and then recruits the host DNA polymerase to start replication. The protein is Replication protein E1 of Homo sapiens (Human).